Here is a 122-residue protein sequence, read N- to C-terminus: Large ribosomal subunit protein uL14 (122 aa).

Belongs to the universal ribosomal protein uL14 family. As to quaternary structure, part of the 50S ribosomal subunit. Forms a cluster with proteins L3 and L19. In the 70S ribosome, L14 and L19 interact and together make contacts with the 16S rRNA in bridges B5 and B8.

Binds to 23S rRNA. Forms part of two intersubunit bridges in the 70S ribosome. This chain is Large ribosomal subunit protein uL14, found in Chlamydia trachomatis serovar A (strain ATCC VR-571B / DSM 19440 / HAR-13).